The following is a 252-amino-acid chain: Phosphoglycolate phosphatase (252 aa).

The active-site Nucleophile is the Asp13. Mg(2+) contacts are provided by Asp13, Asp15, and Asp192.

The protein belongs to the HAD-like hydrolase superfamily. CbbY/CbbZ/Gph/YieH family. Monomer. The cofactor is Mg(2+). Requires chloride as cofactor.

The enzyme catalyses 2-phosphoglycolate + H2O = glycolate + phosphate. Its pathway is organic acid metabolism; glycolate biosynthesis; glycolate from 2-phosphoglycolate: step 1/1. Functionally, specifically catalyzes the dephosphorylation of 2-phosphoglycolate. Is involved in the dissimilation of the intracellular 2-phosphoglycolate formed during the DNA repair of 3'-phosphoglycolate ends, a major class of DNA lesions induced by oxidative stress. The polypeptide is Phosphoglycolate phosphatase (Shigella boydii serotype 4 (strain Sb227)).